The chain runs to 621 residues: uncharacterized protein (621 aa).

Positions 1 to 15 are cleaved as a signal peptide; that stretch reads MRRSVCYVTPSVARA.

The protein belongs to the chlamydial CPn_0512/CT_425/TC_0708 family.

This is an uncharacterized protein from Chlamydia trachomatis serovar D (strain ATCC VR-885 / DSM 19411 / UW-3/Cx).